The primary structure comprises 809 residues: Protein TOC75, chloroplastic (809 aa).

Residues 1 to 17 (MRTSVIPNRLTPTLTTH) are compositionally biased toward polar residues. Residues 1 to 35 (MRTSVIPNRLTPTLTTHPSRRRNDHITTRTSSLKC) constitute a chloroplast transit peptide. Residues 1 to 44 (MRTSVIPNRLTPTLTTHPSRRRNDHITTRTSSLKCHLSPSSGDN) form a disordered region. A chloroplast; outer membrane-targeting transit peptide spans 36-131 (HLSPSSGDNN…RILSPARAIA (96 aa)). Topologically, residues 132–143 (DEPKSEDWDSHE) are chloroplast intermembrane. A beta stranded membrane pass occupies residues 144 to 152 (LPADITVLL). At 153 to 160 (GRLSGFKK) the chain is on the cytoplasmic side. A beta stranded transmembrane segment spans residues 161–169 (YKISDILFF). Over 170–225 (DRNKKSKVETQDSFLDMVSLKPGGVYTKAQLQKELESLATCGMFEKVDMEGKTNAD) the chain is Chloroplast intermembrane. A beta stranded membrane pass occupies residues 226–234 (GSLGLTISF). Topologically, residues 235–247 (AESMWERADRFRC) are cytoplasmic. Residues 248 to 254 (INVGLMG) form a beta stranded membrane-spanning segment. The Chloroplast intermembrane portion of the chain corresponds to 255–357 (QSKPVEMDPD…VVCEVVEGDI (103 aa)). The beta stranded transmembrane segment at 358 to 365 (TKLSIQYL) threads the bilayer. The Cytoplasmic segment spans residues 366–410 (DKLGNVVEGNTEGPVVQRELPKQLLPGHTFNIEAGKQALRNINSL). A beta stranded membrane pass occupies residues 411 to 418 (ALFSNIEV). At 419–427 (NPRPDEMNE) the chain is on the chloroplast intermembrane side. A beta stranded membrane pass occupies residues 428 to 436 (GSIIVEIKL). Over 437 to 442 (KELEQK) the chain is Cytoplasmic. Residues 443–452 (SAEVSTEWSI) form a beta stranded membrane-spanning segment. Residues 453 to 464 (VPGRGGRPTLAS) are Chloroplast intermembrane-facing. The chain crosses the membrane as a beta stranded span at residues 465–473 (LQPGGTITF). The Cytoplasmic segment spans residues 474–500 (EHRNLQGLNRSLTGSVTTSNFLNPQDD). Residues 501–509 (LAFKMEYAH) form a beta stranded membrane-spanning segment. The Chloroplast intermembrane segment spans residues 510-553 (PYLDGVDNPRNRTLRVSCFNSRKLSPVFTGGPGVDEVPSIWVDR). A beta stranded membrane pass occupies residues 554–561 (AGVKANIT). Over 562 to 569 (ENFSRQSK) the chain is Cytoplasmic. Residues 570–577 (FTYGLVME) form a beta stranded membrane-spanning segment. Residues 578–684 (EIITRDESNH…VEEGAGKSPP (107 aa)) lie on the Chloroplast intermembrane side of the membrane. Residues 685-693 (PVLVLHGHY) traverse the membrane as a beta stranded segment. Over 694 to 705 (GGCVGDLPSYDA) the chain is Cytoplasmic. Residues 706–714 (FTLGGPYSV) traverse the membrane as a beta stranded segment. Topologically, residues 715 to 776 (RGYNMGEIGA…VYRRMGQGSS (62 aa)) are chloroplast intermembrane. Residues 777 to 783 (YGAGMKL) traverse the membrane as a beta stranded segment. Residues 784–797 (GLVRAEYAVDHNSG) lie on the Cytoplasmic side of the membrane. A beta stranded transmembrane segment spans residues 798–805 (TGAVFFRF). The Chloroplast intermembrane segment spans residues 806 to 809 (GERF).

The protein belongs to the TOC75 family. Part of the TOC core complex that includes a protein for the specific recognition of transit peptides surrounded by a ring composed of four proteins forming translocation channels, and four to five GTP-binding proteins providing energy. This core complex can interact with components of the TIC complex to form a larger import complex. Chloroplastic protein precursors such as prSS (precursor of the RuBisCO small subunit) also interact with these complexes. TOC75 interacts with OEP14, TOC34/OEP34, TOC86/OEP86, TIC55, TIC110/IEP110 and CLPC. In terms of tissue distribution, mostly expressed in young leaves, also present in old leaves, roots and stems (at protein level).

Its subcellular location is the plastid. The protein localises to the chloroplast outer membrane. Functionally, mediates the insertion of proteins targeted to the outer membrane of chloroplasts. Required for the import of protein precursors into chloroplasts. Forms the voltage-dependent preprotein translocation channels (hydrophilic beta barrel) of the TOC complex in the chloroplastic outer membrane. The narrowest inner diameter of this channel is approximately 14 Angstroms. In Pisum sativum (Garden pea), this protein is Protein TOC75, chloroplastic (TOC75).